The following is an 897-amino-acid chain: Patched domain-containing protein 1 (897 aa).

Residues 25-45 (PVFFLTVPAVLTIIFGSTVLS) form a helical membrane-spanning segment. 3 N-linked (GlcNAc...) asparagine glycosylation sites follow: asparagine 132, asparagine 167, and asparagine 179. 2 helical membrane passes run 271 to 291 (GVLA…AATI) and 306 to 326 (GLLG…IFFI). The SSD domain maps to 273–433 (LAKSEVLVSL…FSFYGSCLVF (161 aa)). N-linked (GlcNAc...) asparagine glycosylation is present at asparagine 332. 4 helical membrane passes run 335-355 (LLGI…ELLA), 377-397 (VMVC…MGAS), 414-434 (VAVL…LVFA), and 506-526 (PFVV…CLQI). N-linked (GlcNAc...) asparagine glycans are attached at residues asparagine 572 and asparagine 603. Helical transmembrane passes span 701–721 (PILT…FLVI), 727–747 (FWLI…MTLW), and 754–774 (ISIL…APHL). An N-linked (GlcNAc...) asparagine glycan is attached at asparagine 803. Transmembrane regions (helical) follow at residues 806 to 826 (CFVI…YTLF) and 831 to 851 (LTAG…LTFF). The segment covering 856-866 (KRHKKKKRAKR) has biased composition (basic residues). Residues 856 to 881 (KRHKKKKRAKRKEREREREREREREE) form a disordered region. Basic and acidic residues predominate over residues 867-881 (KEREREREREREREE).

It belongs to the patched family.

It localises to the cell membrane. The protein localises to the cell projection. The protein resides in the dendritic spine. Its function is as follows. Can bind cholesterol in vitro. The chain is Patched domain-containing protein 1 (ptchd1) from Danio rerio (Zebrafish).